We begin with the raw amino-acid sequence, 354 residues long: DNA integrity scanning protein DisA (354 aa).

The 139-residue stretch at 6–144 (GIGIKNVLKI…GDIKYVLRES (139 aa)) folds into the DAC domain. ATP contacts are provided by residues G73, L91, and 104 to 108 (TRHRT).

Belongs to the DisA family. In terms of assembly, homooctamer. It depends on Mg(2+) as a cofactor.

The enzyme catalyses 2 ATP = 3',3'-c-di-AMP + 2 diphosphate. In terms of biological role, participates in a DNA-damage check-point that is active prior to asymmetric division when DNA is damaged. DisA forms globular foci that rapidly scan along the chromosomes during sporulation, searching for lesions. When a lesion is present, DisA pauses at the lesion site. This triggers a cellular response that culminates in a temporary block in sporulation initiation. Its function is as follows. Also has diadenylate cyclase activity, catalyzing the condensation of 2 ATP molecules into cyclic di-AMP (c-di-AMP). c-di-AMP acts as a signaling molecule that couples DNA integrity with progression of sporulation. The rise in c-di-AMP level generated by DisA while scanning the chromosome, operates as a positive signal that advances sporulation; upon encountering a lesion, the DisA focus arrests at the damaged site and halts c-di-AMP synthesis. This Clostridium beijerinckii (strain ATCC 51743 / NCIMB 8052) (Clostridium acetobutylicum) protein is DNA integrity scanning protein DisA.